We begin with the raw amino-acid sequence, 350 residues long: Methionine aminopeptidase 1D, chloroplastic/mitochondrial (350 aa).

Residues 1 to 49 constitute a chloroplast and mitochondrion transit peptide; sequence MAGVKSLQPRLISSFLGNNSIRSTQPLIHLFRFDLGRRHVSMQLSRTFS. Gly-50 bears the N-acetylglycine mark. A disordered region spans residues 71–90; it reads RLRPGNVSPRRPVPGHITKP. Residue His-180 participates in substrate binding. The a divalent metal cation site is built by Asp-197, Asp-208, and His-271. His-278 serves as a coordination point for substrate. Positions 303 and 334 each coordinate a divalent metal cation.

This sequence belongs to the peptidase M24A family. Methionine aminopeptidase type 1 subfamily. Co(2+) is required as a cofactor. The cofactor is Zn(2+). Requires Mn(2+) as cofactor. It depends on Fe(2+) as a cofactor. Ubiquitous. Preferentially expressed in green tissues.

It localises to the plastid. The protein resides in the chloroplast. Its subcellular location is the mitochondrion. It catalyses the reaction Release of N-terminal amino acids, preferentially methionine, from peptides and arylamides.. Removes the N-terminal methionine from nascent proteins. The N-terminal methionine is often cleaved when the second residue in the primary sequence is small and uncharged (Met-Ala-, Cys, Gly, Pro, Ser, Thr, or Val). The sequence is that of Methionine aminopeptidase 1D, chloroplastic/mitochondrial (MAP1D) from Arabidopsis thaliana (Mouse-ear cress).